A 561-amino-acid polypeptide reads, in one-letter code: Cloacin (561 aa).

Gly residues-rich tracts occupy residues 1–21 (MSGG…GGQA), 29–40 (SGKGGPSSGGGT), and 66–91 (FGNG…GGGQ). 5 disordered regions span residues 1 to 93 (MSGG…GQSS), 254 to 273 (PKGI…TAGG), 304 to 326 (VKQR…PEEG), 432 to 507 (KAAL…KRAR), and 530 to 561 (RASD…KKYL). Residues 1-180 (MSGGDGRGPG…DTVTETPAST (180 aa)) form an involved in the translocation of the protein across the cell membrane region. The segment at 200–420 (DERQHIAVVA…NAKLKAAQAS (221 aa)) is responsible for the receptor binding activity. 2 stretches are compositionally biased toward basic and acidic residues: residues 306–326 (QRQE…PEEG) and 440–494 (ESRK…EGKP). Positions 421-561 (LNAMNDALSR…DPKRNIKKYL (141 aa)) are ribonuclease activity. Residues 540–561 (FDPKTGKQVKGPDPKRNIKKYL) form a binding of immunity protein region.

It belongs to the cloacin colicin family.

Inactivates ribosomes by hydrolyzing 16S RNA in 30S ribosomes at a specific site. Functionally, colicins are polypeptide toxins produced by and active against E.coli and closely related bacteria. In Escherichia coli, this protein is Cloacin (ccl).